A 191-amino-acid polypeptide reads, in one-letter code: Protein GrpE (191 aa).

Basic and acidic residues predominate over residues 1–15 (MGKEEKNNIEDKALD). The tract at residues 1–35 (MGKEEKNNIEDKALDNEQEMDQESTSKAVEELSIE) is disordered.

This sequence belongs to the GrpE family. In terms of assembly, homodimer.

It is found in the cytoplasm. In terms of biological role, participates actively in the response to hyperosmotic and heat shock by preventing the aggregation of stress-denatured proteins, in association with DnaK and GrpE. It is the nucleotide exchange factor for DnaK and may function as a thermosensor. Unfolded proteins bind initially to DnaJ; upon interaction with the DnaJ-bound protein, DnaK hydrolyzes its bound ATP, resulting in the formation of a stable complex. GrpE releases ADP from DnaK; ATP binding to DnaK triggers the release of the substrate protein, thus completing the reaction cycle. Several rounds of ATP-dependent interactions between DnaJ, DnaK and GrpE are required for fully efficient folding. This is Protein GrpE from Francisella philomiragia subsp. philomiragia (strain ATCC 25017 / CCUG 19701 / FSC 153 / O#319-036).